The following is a 525-amino-acid chain: Neuropilin and tolloid-like protein 2 (525 aa).

The signal sequence occupies residues 1 to 22 (MALERLCSVLKVLLITVLVVEG). Residues 23–347 (IAVAQKTQDG…GVFEQITKTH (325 aa)) are Extracellular-facing. Disulfide bonds link Cys45–Cys72, Cys100–Cys122, Cys177–Cys207, Cys234–Cys256, Cys297–Cys309, Cys304–Cys322, and Cys316–Cys331. CUB domains follow at residues 45-159 (CGIW…YSFI) and 177-292 (CQFE…FTSF). In terms of domain architecture, LDL-receptor class A spans 296-332 (PCTSSTFFCHSNMCINNSLVCNGVQNCAYPWDENHCK). An N-linked (GlcNAc...) asparagine glycan is attached at Asn311. The helical transmembrane segment at 348–368 (GTIIGITSGIVLVLLIISILV) threads the bilayer. The Cytoplasmic segment spans residues 369 to 525 (QVKQPRKKVM…SAQASISIDF (157 aa)). The residue at position 409 (Ser409) is a Phosphoserine.

Interacts with GRIK2 and GRIK3, but neither with AMPA-nor with NMDA-sensitive glutamate receptors. Post-translationally, N-glycosylated.

Its subcellular location is the membrane. Accessory subunit of neuronal kainate-sensitive glutamate receptors, GRIK2 and GRIK3. Increases kainate-receptor channel activity, slowing the decay kinetics of the receptors, without affecting their expression at the cell surface, and increasing the open probability of the receptor channels. Modulates the agonist sensitivity of kainate receptors. Slows the decay of kainate receptor-mediated excitatory postsynaptic currents (EPSCs), thus directly influencing synaptic transmission. In Homo sapiens (Human), this protein is Neuropilin and tolloid-like protein 2 (NETO2).